The chain runs to 248 residues: MKAIDPDLLLRAYSIGVFPMADSRAADDVYWVEPKKRGILPLDHFRLSRSLAKTIRSDRFAVTADRAFGEVVAECAAVTSQRPDTWINPAIEAAYADLHRRGHAHSIECWREGRLVGGLYGVRLGGAFFGESMFSRESNASKVALAWLVARLRAGGFRLLDCQFITDHLQSLGAIEVSRDDYVALLDVALGVVAGAGAAGGVAVAGAAAGWSAPDFFALDGGATDPDTRTVSGPISGCTIVQLLGQTS.

The protein belongs to the L/F-transferase family.

The protein resides in the cytoplasm. The catalysed reaction is N-terminal L-lysyl-[protein] + L-leucyl-tRNA(Leu) = N-terminal L-leucyl-L-lysyl-[protein] + tRNA(Leu) + H(+). It catalyses the reaction N-terminal L-arginyl-[protein] + L-leucyl-tRNA(Leu) = N-terminal L-leucyl-L-arginyl-[protein] + tRNA(Leu) + H(+). The enzyme catalyses L-phenylalanyl-tRNA(Phe) + an N-terminal L-alpha-aminoacyl-[protein] = an N-terminal L-phenylalanyl-L-alpha-aminoacyl-[protein] + tRNA(Phe). Its function is as follows. Functions in the N-end rule pathway of protein degradation where it conjugates Leu, Phe and, less efficiently, Met from aminoacyl-tRNAs to the N-termini of proteins containing an N-terminal arginine or lysine. The protein is Leucyl/phenylalanyl-tRNA--protein transferase of Rhizorhabdus wittichii (strain DSM 6014 / CCUG 31198 / JCM 15750 / NBRC 105917 / EY 4224 / RW1) (Sphingomonas wittichii).